The following is a 237-amino-acid chain: Putative HTH-type transcriptional regulator ycf28 (237 aa).

One can recognise an HTH crp-type domain in the interval 155–228 (KSITNRLISL…KKKVIIHDPI (74 aa)). The H-T-H motif DNA-binding region spans 188–207 (HKVLAQIIGSNRVSITRIIS).

It localises to the plastid. The protein resides in the chloroplast. This Porphyra purpurea (Red seaweed) protein is Putative HTH-type transcriptional regulator ycf28 (ycf28).